A 173-amino-acid polypeptide reads, in one-letter code: Mesencephalic astrocyte-derived neurotrophic factor homolog (173 aa).

The signal sequence occupies residues 1-22; sequence MNTSQIVLMFCLVVGVAQTALA. Cystine bridges form between cysteine 28-cysteine 114, cysteine 31-cysteine 103, cysteine 61-cysteine 72, and cysteine 148-cysteine 151.

Belongs to the ARMET family.

The protein localises to the secreted. Required during the maturation of the embryonic nervous system for maintenance of neuronal and cuticular connectivity. Essential for maintenance of dopaminergic neurons and dopamine levels. The polypeptide is Mesencephalic astrocyte-derived neurotrophic factor homolog (Drosophila grimshawi (Hawaiian fruit fly)).